The sequence spans 289 residues: Acetyl-coenzyme A carboxylase carboxyl transferase subunit beta (289 aa).

Residues 27 to 289 (LWSKCPSCES…SFMRVPAGAA (263 aa)) enclose the CoA carboxyltransferase N-terminal domain. The Zn(2+) site is built by cysteine 31, cysteine 34, cysteine 50, and cysteine 53. The C4-type zinc-finger motif lies at 31–53 (CPSCESVLYRTDLESNSEVCPKC).

Belongs to the AccD/PCCB family. In terms of assembly, acetyl-CoA carboxylase is a heterohexamer composed of biotin carboxyl carrier protein (AccB), biotin carboxylase (AccC) and two subunits each of ACCase subunit alpha (AccA) and ACCase subunit beta (AccD). The cofactor is Zn(2+).

Its subcellular location is the cytoplasm. The catalysed reaction is N(6)-carboxybiotinyl-L-lysyl-[protein] + acetyl-CoA = N(6)-biotinyl-L-lysyl-[protein] + malonyl-CoA. Its pathway is lipid metabolism; malonyl-CoA biosynthesis; malonyl-CoA from acetyl-CoA: step 1/1. Its function is as follows. Component of the acetyl coenzyme A carboxylase (ACC) complex. Biotin carboxylase (BC) catalyzes the carboxylation of biotin on its carrier protein (BCCP) and then the CO(2) group is transferred by the transcarboxylase to acetyl-CoA to form malonyl-CoA. In Methylobacillus flagellatus (strain ATCC 51484 / DSM 6875 / VKM B-1610 / KT), this protein is Acetyl-coenzyme A carboxylase carboxyl transferase subunit beta.